The sequence spans 132 residues: Small ribosomal subunit protein uS8 (132 aa).

It belongs to the universal ribosomal protein uS8 family. As to quaternary structure, part of the 30S ribosomal subunit. Contacts proteins S5 and S12.

One of the primary rRNA binding proteins, it binds directly to 16S rRNA central domain where it helps coordinate assembly of the platform of the 30S subunit. This Christiangramia forsetii (strain DSM 17595 / CGMCC 1.15422 / KT0803) (Gramella forsetii) protein is Small ribosomal subunit protein uS8.